Consider the following 427-residue polypeptide: 3-phosphoshikimate 1-carboxyvinyltransferase (427 aa).

3-phosphoshikimate-binding residues include K22, S23, and R27. K22 is a phosphoenolpyruvate binding site. Phosphoenolpyruvate-binding residues include G96 and R124. The 3-phosphoshikimate site is built by S169, S170, Q171, S197, D313, N336, and K340. Q171 is a binding site for phosphoenolpyruvate. The Proton acceptor role is filled by D313. Positions 344, 386, and 411 each coordinate phosphoenolpyruvate.

This sequence belongs to the EPSP synthase family. In terms of assembly, monomer.

It localises to the cytoplasm. It carries out the reaction 3-phosphoshikimate + phosphoenolpyruvate = 5-O-(1-carboxyvinyl)-3-phosphoshikimate + phosphate. The protein operates within metabolic intermediate biosynthesis; chorismate biosynthesis; chorismate from D-erythrose 4-phosphate and phosphoenolpyruvate: step 6/7. Catalyzes the transfer of the enolpyruvyl moiety of phosphoenolpyruvate (PEP) to the 5-hydroxyl of shikimate-3-phosphate (S3P) to produce enolpyruvyl shikimate-3-phosphate and inorganic phosphate. This Salmonella schwarzengrund (strain CVM19633) protein is 3-phosphoshikimate 1-carboxyvinyltransferase.